The sequence spans 96 residues: Co-chaperonin GroES (96 aa).

This sequence belongs to the GroES chaperonin family. As to quaternary structure, heptamer of 7 subunits arranged in a ring. Interacts with the chaperonin GroEL.

It localises to the cytoplasm. Together with the chaperonin GroEL, plays an essential role in assisting protein folding. The GroEL-GroES system forms a nano-cage that allows encapsulation of the non-native substrate proteins and provides a physical environment optimized to promote and accelerate protein folding. GroES binds to the apical surface of the GroEL ring, thereby capping the opening of the GroEL channel. The sequence is that of Co-chaperonin GroES from Thioalkalivibrio sulfidiphilus (strain HL-EbGR7).